A 367-amino-acid polypeptide reads, in one-letter code: Acryloyl-CoA reductase electron transfer subunit beta (367 aa).

An FAD-binding site is contributed by 305–333 (VYVALGISGAIQHKAGMQDSELIIAVNKD).

As to quaternary structure, heterohexadecamer; tetramer of tetramers. Each tetramer is composed of 2 alpha (AcrC), a beta (AcrA) and a gamma (AcrB) subunit.

It is found in the cytoplasm. Its function is as follows. Part of the ETF-acryloyl-CoA reductase complex involved in the pathway of L-alanine fermentation. The electron transfer flavoprotein (ETF) serves as a specific electron acceptor for acryloyl-CoA reductase. The polypeptide is Acryloyl-CoA reductase electron transfer subunit beta (acrA) (Anaerotignum propionicum (Clostridium propionicum)).